The chain runs to 132 residues: Small ribosomal subunit protein uS8 (132 aa).

Belongs to the universal ribosomal protein uS8 family. In terms of assembly, part of the 30S ribosomal subunit. Contacts proteins S5 and S12.

Its function is as follows. One of the primary rRNA binding proteins, it binds directly to 16S rRNA central domain where it helps coordinate assembly of the platform of the 30S subunit. The sequence is that of Small ribosomal subunit protein uS8 from Desulfitobacterium hafniense (strain DSM 10664 / DCB-2).